The primary structure comprises 288 residues: Quinate/shikimate dehydrogenase (288 aa).

Lys71 and Asp107 together coordinate substrate. NAD(+)-binding positions include 132–135 (AGGA), 155–158 (NRRD), Lys205, 232–235 (CVYN), and Gly255.

Belongs to the shikimate dehydrogenase family. As to quaternary structure, homodimer.

The catalysed reaction is L-quinate + NAD(+) = 3-dehydroquinate + NADH + H(+). It carries out the reaction L-quinate + NADP(+) = 3-dehydroquinate + NADPH + H(+). The enzyme catalyses shikimate + NADP(+) = 3-dehydroshikimate + NADPH + H(+). It catalyses the reaction shikimate + NAD(+) = 3-dehydroshikimate + NADH + H(+). It functions in the pathway metabolic intermediate biosynthesis; chorismate biosynthesis; chorismate from D-erythrose 4-phosphate and phosphoenolpyruvate: step 4/7. Functionally, the actual biological function of YdiB remains unclear, nor is it known whether 3-dehydroshikimate or quinate represents the natural substrate. Catalyzes the reversible NAD-dependent reduction of both 3-dehydroshikimate (DHSA) and 3-dehydroquinate to yield shikimate (SA) and quinate, respectively. It can use both NAD or NADP for catalysis, however it has higher catalytic efficiency with NAD. The protein is Quinate/shikimate dehydrogenase of Escherichia coli O139:H28 (strain E24377A / ETEC).